A 5099-amino-acid chain; its full sequence is MGRFSCIFPSLTDGYIPDPAHCRAAGRRVYEIDLGGWGPLPDRPDAHLVAAWALILSSYVGTDEVAFYVVPARGPDATALCELKVNGSLPRRSLTDDAWQLLHPLPLGPGQVSSETANTIITFAEDIDPLFITQAEEAFLTLHVRNTSPGNVALHLGYHLSLFTDAQAANVGTAMAQVLTSLAGDPDELVRDVDHMSRTHLDQIWHFNANVPSTWQECFHDVVQRHAADRPHSLAIDAWDGRLTYAELVGKATPLARHMQERGVRPGVVVPISFERSAGALIAMLAVSKAGGAFVSVPTSLPPGRLDAILEVIEAPFVLTRSTHQSFWAGRLPALIIDNYPKPASTAVVETLAKADDLFYVIFTSGSTGRPKGCMLSHSNWLNGALRNAPNWKYGPNSRVLQMLNHTFDMSLLEICTSLGSGACVCIPPADEVEAGLAGAINRWQVNHVIMTPSLARALRPGDVPGLRTMCLGGEAFPREIVTMWSECIHLFQFYGPSECSINSSTRAITGVDADPLNIGPPNSAACWVSDIQDHNKLVPIGAIGELLVSGPIVGMGYLRNPVKTAEAFIDHVGFIPMDDPKFAGFRLYKTGDLVRWNSDGTLTFCGRADTQVKLNGQRLELAEVEYQLGLEADVQLAIALVPQVGRCKNNLIAILTVRGAATSSRGVTAGEIPLLNRQDPIVQQAVKRLRAQLQQALPRYMVPTIWAFVGHMPMSASGKIDRVRVRGWVEEMSQETFDAITGRSFEADDHLLGLTHLENEIQLAWAEALGLSAAEVGLHQPFVALGGDSIKALDAVGRCRARQVDITMVSTLSCEGVREAASLAKVRDSPTQRVVEMAVDYSDLWDCLSSDYDLAKLGIGNADEVEDVFPCTSMQEGMFLGQIRRPGAYHMRFFHRVQLKGGGLPTVERIQTAWSSLVARHPSLRTIFVDDLSPEAIYHSVVLRNVPVDTTTREVPRDLSPEDALSMFTQELVPFRPNAPLHRLRLFTCRGRVSYFMLEISHVIMDGYALSVFRREFIQACSTPASVPRGPDYRMFANYHRTRQTADSAAYWTAYLKDAAPCHIPTYDQAMAADGLDYPRTLLRRDFSYQTSGTFLQRCKERQVTLACAIRATWALVLRAYTQSQDVCFGYVSSGRNVPVPDVETIFGLCLSMQVCRARVGESRTLVDLARRIQEDYVESLPYQHYPLAEVQRGLKQTRRQALFNTAISMEWVPPAGDDEDALIDLEEIREQDDPTEYDIAISVDVHAGCIKLGFLYWPTLTEFEITHLAQAMQGAMDCFALQPDGPVDSLTLLKPGDLSSALVGWPDLLPLEAVRGNVMSMIDRWVNRQPDTLAIDGWDESLTYHQLQQQSSWVARNLLHRGVHQGDRILVCMDRSSRTVVTILGIVRSGAVLVLSNPADPAKRLQWLTQKCNAAMIVADPQYRDRFEAPGNPSVTVVDAPSVCTPAAWDYLFPVLDGQDPVSILFTSGSTGTPKGIVMHHGSLATSVLLGHGRTLRFSRQTRMLHFASLTFDAALAEIFTTLAHGGCMCIPSEDDRLSDVPGCIARFKVNTAMLTPSVGRILDPAALPTLRTLVLVGEPMSRLDVERFAPALDLYNGAGPTETSIMVTIAGPMQPTDDPLNLGHAVAGVRLWVTETEAPNRLAPLGAVGELVVEGSLVTQGYLDDPVRTQEAFLSKLAWLPSHNPLYRTGDLVRYVADGSFRYMGRKDTQVKLRGQRIELQEVEYHLRCSWPHAQVVVEMVIPDGRTRSQAALVAFVSGLTPEDAHFLFNGALISAEAPGIAQAVLSEKTTQALSEALPRHMVPSIYLALETIPLSVNGKADRRRLRDLGASWLASSAFHPGPECLQTPTAEWARAPELERTLVELWATTLSIEPGAIRGDDSFFELGGDSVSAMKLVATARDKYKLSLSVPQVFRYPTIRQIATQCEGIAVQLASSASSTTEEGFTFSTPDESSTNEGLDGEFWQLASAQLADLAREKGKTLDVAAILKRMQQESSSSPAPSVSSSSSSSSAPKPLLAQPEPPTNLRDSVPEPFSLIGGGPSAVEQICQQAMEQCQIPRESIEDIYPATPLQEGMMALMAKTPGVYTTTLRCELSNQVDCARLQSAWDQASEAHPILRTRIVLTNDHRAMQVVQHGNRLPWDVYSLRDSDNLPDLTSQMTLGSPLLRLAEIRQAGGQGRLLLVTIHHALYDGWSFPLVKQAVEDAYSGQALKSQAFTPFIAYLNEGRLAAEQFWADHLESFAGGAFPCLPTVDHRIRPTARLTRKLSLPVSAGHQYTLATKIQAAWAVTVSRYDDETDVVFGTVSTGRAAPVPGIDRVAGPTITTIPVRVSLQDRAQRVGPFLQKVQEDGWRSLDHEHLGLQHIRRLGDSAAAACRLQTLLVLQPRQQPPAEPSSAILAGLQDMAELEGLDTYPLMLVCEPDGADVHLIAIFDPVVLHEAILARMVTHWEHVLTQLWTEPDIAVVDLEALSPGDKKVLMRWNGASQLPDGCVHESVHQWRLSTPHAPAVCAWDGDWTYEELDNLSSALAHHLTLHGVSHGTSVALYHEKSRWAAVGLLAVFKAGGILVTLDPAHPVDRLREILGQVQARVILSSQEHEATAKALGTLVLTVEEVATQPEPELFRPVGPITSSQCAFTPFTSGSTGRPKGIPLEHRGMVATIASMAERCLLTTTSRVLQFASFAFDASVMEHLLAWYAGGCLCVPSEFDRQANLGEVIRDLRVNWAFLTPSCLRLITPDDVPCLEGMGLGGEPVLPEHITTWAPRLRQLVQMYGPAECSFVTVLTEVTQASENRLIGSPSACRCWVIDPMDPDRLMPLGAIGELVIEGLAVGRGYINEPQRTAEAFIAPPPWLQTLYPDDGQPRRLYRTGDLVRYAGDDGRLTFVGRKDGQLKLHGQRIELGDVETHLRPLIPATQGIAVEMIVCADDQNPLLAAFIEVSQDATALQRNTHLVHPGRVQSAVDIKAIESTLARTVPHYMVPSIYLHISKLPLNPSGKLNRRQLREMVGALPRQSLNEYAIKCHSSTTNRPATAQERGLQTIWATVLALDRDAIGVHDDFFRMGGDSIAGMQVATKCNAAGMRISSADLFRHRTIARLVLHLQNTSQESSAMITLPEEKFDEWVHLAPIQQLFFENAPDGPNHFNQSLLLRTGRQVDAQELAAGLDILVQRHSMLRARFRRTDSGRWTQQVMSLGPSPSSFYRLFTHGKASPETLPGIFTASQSAIDIQKGPLLSVDLVDLTDGSQLVYFVAHHLVIDLVSWRILHAELEDYLRTGSLAAMAESTPFLTWCRAQAEYSAKELSPAQSLPGYQSAANHFDPEGYWGISMESNTFTQVASYRFTLDGDTTETLFGVANDALGTQPVEIMLAALWYSFTQTLTGRPEPSIYVEGHGREPWTDTIDLSGTVGWFTTMSPLVSSPWSNLSQASMRDFADALRYIKDQRRRVPANGWAYFASRYLNDEGRVVYGRTNPAVEILFNYMGQYQQLTREDAILQLVGDDIQAGTGAADIAGDVRRFALIDVSAFTAHGCLSFDFSFPESIQHRDRLQHWFEQCRQTLIVAASILSLQTPQKTLTDFPLLPSLTYDQLSQCLDHTLPAVGLFPSDIVDIYPCSPVQRGMLLAQLRNPQFYQQRFRFRVLPDTRTEAIGLVGLQQVRDAWIEVINRHDILRTIFLPVSDQGYVDQVLLKPGSLHHLVRIGAGEPDTAIDPGTPHWVNISHDPTGTVVCDWNVSHALVDAVSVAIIQREVSQALQGHLSTPPPQQYGNYIQWLSAQNMQETQDYWKKYLQAVEPCLFPRLAAHSDRLTSPVGIQATRATVDREVRIDQLCHQHGITLTNVFHLVWALVLRTYVGTNNVCFGYATQGRDVPVAGVEEMVGPVVNVLATTLRLQDSESVLDALQTHQTHLADNLAHQNHALVDIYATHGVAGSQLFNTIVSLQDLSHHETADTQSLRLEVMPAHDSSEYDIALNVGVNKTSIELVCSYQTWSLSAEHADALLRTAARVLDEILQTPLKTIGEVDVVSLTCKQQAMRWNATLPATVHEYVHEQIQAQCRLYANREAVCAWDGHFTFAEIDDLSSRLAGNLISLGAQPGRIVPIYSPKSRWVVIAILGVLKAGAAFTLLDASHPVARLQEICQGVNADLIISLASHASVAAQLAAAIVILDNAPSMSSDEIIMCTRRQSLSTESLAYVIFTSGSTGKPKGVMVSHSNLCTSAMAQTVALNLTTESRVLQFASYAFDACILEVIGALFAGACVCIPSETDSKDDLVGSIERMRVTWALLTPSVARILNQETLPTLETLVLGGEPITLSDLEPWRSRLQLVCAYGPSECTIVSTTTALSTFPNRSKNIGQRGACATWVVDPQDYQKLVPFGATGELLIEGPIVGQGYLGDAVRTAECFPPPPRWLSQLRQAPTRVYRTGDLVRYESDGTIRFVGRKDSQIKFHGQRIELGDIEHHAQDAFRDAQTVIIDLITPGELHKAYLAAFVLQKDTDAHLDKVDDDCILLSPSDRFRSRSLAAQEQMHEELPHYMVPAIFLPLSRVPLAKTGKTDRQYLRQCALALQGHDLEAYRAASSTKRPPSTGMQQGIQALVATVLGKDTTEVGMDDSFFHLGGDSVQAMRLVSVGRQQGLAVSVLSIFDHPRLADLAEHISSRVKDRNSVRLPSSSLLPSISEAGQLDRLVEGHPFEKDDVVDILPTTGFQRYWLDMQLSSYVIIDIPGQVDWAQLTKALQRVIENCPILRTAFVPYRGSTVQVILKTIVSLIEVDLTGDLTSAVEEWCRQDAKTPVSPGTSYMHTVRASQGATQHKLIMRLSHAQYDAVALSLVLNHLSCTYADQLPLPDAPAFSDYLTYQRTRNKERASSDFWGQLLKGASITNLGPQGSRDDKEATIARSRHISVGPLPRGITMATVVKAAWSLILARRTGMCDVLFGQVVHGRNTSFPGIERVVGPCTNITPVRASIAPQWTGLDLLQALQDQHRESMAWETVDLDDVLSYCANWTPGSALQTVVQHQNVVLEDLGLRLGDVPSTVSVRAFDHAPREVWLYSSTDDSHPDRLSLRIFSSSWTLDDTIAEELLGLVAEEIVELLRNPEQVLCV.

Positions 224–615 (QRHAADRPHS…CGRADTQVKL (392 aa)) are adenylation 1. The Carrier 1 domain maps to 756-829 (THLENEIQLA…EAASLAKVRD (74 aa)). Ser790 is subject to O-(pantetheine 4'-phosphoryl)serine. Residues 867–1297 (EDVFPCTSMQ…PVDSLTLLKP (431 aa)) are condensation 1. An adenylation 2 region spans residues 1325–1717 (DRWVNRQPDT…GRKDTQVKLR (393 aa)). One can recognise a Carrier 2 domain in the interval 1857-1934 (ARAPELERTL…QIATQCEGIA (78 aa)). Ser1894 is modified (O-(pantetheine 4'-phosphoryl)serine). The interval 1995–2040 (MQQESSSSPAPSVSSSSSSSSAPKPLLAQPEPPTNLRDSVPEPFSL) is disordered. Residues 1999 to 2017 (SSSSPAPSVSSSSSSSSAP) are compositionally biased toward low complexity. The interval 2067–2482 (EDIYPATPLQ…ALSPGDKKVL (416 aa)) is condensation 2. Residues 2505 to 2897 (LSTPHAPAVC…VGRKDGQLKL (393 aa)) are adenylation 3. The 77-residue stretch at 3032–3108 (RPATAQERGL…RLVLHLQNTS (77 aa)) folds into the Carrier 3 domain. Ser3069 carries the O-(pantetheine 4'-phosphoryl)serine modification. 2 condensation regions span residues 3125 to 3589 (WVHL…TYDQ) and 3610 to 4033 (DIYP…QQAM). Residues 4058–4446 (YANREAVCAW…VGRKDSQIKF (389 aa)) form an adenylation 4 region. One can recognise a Carrier 4 domain in the interval 4581 to 4657 (PPSTGMQQGI…DLAEHISSRV (77 aa)). An O-(pantetheine 4'-phosphoryl)serine modification is found at Ser4618. The segment at 4696-5017 (DILPTTGFQR…LQTVVQHQNV (322 aa)) is condensation 5.

The protein belongs to the NRP synthetase family.

It functions in the pathway secondary metabolite biosynthesis. Functionally, nonribosomal peptide synthetase; part of the gene cluster that mediates the biosynthesis of malformins, cyclic pentapeptides with a disulfide bond between 2 consecutive cysteins, that show potential anti-tumor as well as antimalarial and antitrypanosomal properties. The nonribosomal peptide synthetase mlfA is responsible of the formation of the cyclic pentapeptide. The malformin biosynthesis clusters in malformin-producing fungi also contain enzymes involved in the formation of the disulfide bond between the two consecutive cysteins within malformins, in addition to additional tailoring enzymes such as methyltransferases or oxidoreductases. They are also composed of up to 4 major facilitator superfamily transporters, and transcription factors probably involved in the regulation of the expression of those clusters. This Aspergillus sclerotiicarbonarius (strain CBS 121057 / IBT 28362) protein is Malformin synthetase mlfA.